The sequence spans 462 residues: Probable peptidoglycan glycosyltransferase FtsW (462 aa).

The Cytoplasmic segment spans residues 1–63 (MGCIVCSDGI…VRDGRKFDAP (63 aa)). Residues 64–84 (LLWMVVLMTAFGLLMIYSASV) traverse the membrane as a helical segment. Residues 85–97 (YLASKEGGDQFFY) lie on the Periplasmic side of the membrane. Residues 98 to 118 (LTRQAGFVVAGLIASGFLWFL) form a helical membrane-spanning segment. The Cytoplasmic portion of the chain corresponds to 119 to 125 (CRMRTWR). The helical transmembrane segment at 126-146 (RLVPWIFALSGLLLVAVLIAG) threads the bilayer. At 147–160 (REINGATRWIPLGP) the chain is on the periplasmic side. A helical transmembrane segment spans residues 161-181 (LNFQPTELFKLAVILYLASLF). Residues 182–227 (TRREEVLRSMESLGWQSIWRGTANLIMSATNPQARRETLEMYGRFR) are Cytoplasmic-facing. 2 helical membrane passes run 228-248 (AIIL…VQPD) and 249-269 (FGSF…AGLP). The Cytoplasmic segment spans residues 270–271 (WK). The chain crosses the membrane as a helical span at residues 272–292 (YFFVLVGSVLGGMVLMITAAP). Residues 293–348 (YRVQRVVAFLDPWKDPQGAGYQLTHSLMAIGRGEWFGMGLGASLSKRGFLPEAHTD) lie on the Periplasmic side of the membrane. Residues 349–369 (FIFAIIAEEFGFFGMCVLIFC) traverse the membrane as a helical segment. Residues 370 to 386 (YGWLVVRAFSIGKQSRD) lie on the Cytoplasmic side of the membrane. Residues 387 to 409 (LGLTFNAYIASGIGIWIGIQSFF) form a helical membrane-spanning segment. Residues 410–424 (NIGVNIGALPTKGLT) lie on the Periplasmic side of the membrane. The helical transmembrane segment at 425–445 (LPLMSYGGSSVFFMLISMMLL) threads the bilayer. Topologically, residues 446 to 462 (LRIDYENRRKMRGYRVE) are cytoplasmic.

Belongs to the SEDS family. FtsW subfamily.

It localises to the cell inner membrane. It catalyses the reaction [GlcNAc-(1-&gt;4)-Mur2Ac(oyl-L-Ala-gamma-D-Glu-L-Lys-D-Ala-D-Ala)](n)-di-trans,octa-cis-undecaprenyl diphosphate + beta-D-GlcNAc-(1-&gt;4)-Mur2Ac(oyl-L-Ala-gamma-D-Glu-L-Lys-D-Ala-D-Ala)-di-trans,octa-cis-undecaprenyl diphosphate = [GlcNAc-(1-&gt;4)-Mur2Ac(oyl-L-Ala-gamma-D-Glu-L-Lys-D-Ala-D-Ala)](n+1)-di-trans,octa-cis-undecaprenyl diphosphate + di-trans,octa-cis-undecaprenyl diphosphate + H(+). The protein operates within cell wall biogenesis; peptidoglycan biosynthesis. Functionally, peptidoglycan polymerase that is essential for cell division. The protein is Probable peptidoglycan glycosyltransferase FtsW of Neisseria gonorrhoeae (strain NCCP11945).